Consider the following 757-residue polypeptide: 5-methyltetrahydropteroyltriglutamate--homocysteine methyltransferase (757 aa).

5-methyltetrahydropteroyltri-L-glutamate contacts are provided by residues 15 to 18 (RELK) and lysine 114. L-homocysteine is bound by residues 428–430 (IGS) and glutamate 481. L-methionine-binding positions include 428 to 430 (IGS) and glutamate 481. Residues 512–513 (RC) and tryptophan 558 contribute to the 5-methyltetrahydropteroyltri-L-glutamate site. An L-homocysteine-binding site is contributed by aspartate 596. Position 596 (aspartate 596) interacts with L-methionine. Glutamate 602 is a binding site for 5-methyltetrahydropteroyltri-L-glutamate. Residues histidine 639, cysteine 641, and glutamate 663 each coordinate Zn(2+). Histidine 692 (proton donor) is an active-site residue. Residue cysteine 724 participates in Zn(2+) binding.

The protein belongs to the vitamin-B12 independent methionine synthase family. The cofactor is Zn(2+).

It carries out the reaction 5-methyltetrahydropteroyltri-L-glutamate + L-homocysteine = tetrahydropteroyltri-L-glutamate + L-methionine. Its pathway is amino-acid biosynthesis; L-methionine biosynthesis via de novo pathway; L-methionine from L-homocysteine (MetE route): step 1/1. Its function is as follows. Catalyzes the transfer of a methyl group from 5-methyltetrahydrofolate to homocysteine resulting in methionine formation. In Lactococcus lactis subsp. cremoris (strain SK11), this protein is 5-methyltetrahydropteroyltriglutamate--homocysteine methyltransferase.